Here is a 74-residue protein sequence, read N- to C-terminus: Exodeoxyribonuclease 7 small subunit (74 aa).

Belongs to the XseB family. As to quaternary structure, heterooligomer composed of large and small subunits.

The protein localises to the cytoplasm. It carries out the reaction Exonucleolytic cleavage in either 5'- to 3'- or 3'- to 5'-direction to yield nucleoside 5'-phosphates.. Bidirectionally degrades single-stranded DNA into large acid-insoluble oligonucleotides, which are then degraded further into small acid-soluble oligonucleotides. The sequence is that of Exodeoxyribonuclease 7 small subunit from Glaesserella parasuis serovar 5 (strain SH0165) (Haemophilus parasuis).